The following is a 432-amino-acid chain: Glutamyl-tRNA reductase (432 aa).

Substrate-binding positions include 49-52, serine 107, 112-114, and glutamine 118; these read TCNR and ETQ. The Nucleophile role is filled by cysteine 50. Position 186–191 (186–191) interacts with NADP(+); the sequence is GAGEMG.

The protein belongs to the glutamyl-tRNA reductase family. As to quaternary structure, homodimer.

The enzyme catalyses (S)-4-amino-5-oxopentanoate + tRNA(Glu) + NADP(+) = L-glutamyl-tRNA(Glu) + NADPH + H(+). The protein operates within porphyrin-containing compound metabolism; protoporphyrin-IX biosynthesis; 5-aminolevulinate from L-glutamyl-tRNA(Glu): step 1/2. Its function is as follows. Catalyzes the NADPH-dependent reduction of glutamyl-tRNA(Glu) to glutamate 1-semialdehyde (GSA). The protein is Glutamyl-tRNA reductase of Campylobacter jejuni subsp. jejuni serotype O:2 (strain ATCC 700819 / NCTC 11168).